The following is a 456-amino-acid chain: Protein MGA1 (456 aa).

Residues 3 to 118 mediate DNA binding; it reads PKTFVHQLHA…ILNKIQRKST (116 aa). The tract at residues 229–299 is disordered; sequence SIVQPQQPQQ…QPLPTVPPYS (71 aa). 3 stretches are compositionally biased toward low complexity: residues 231 to 246, 253 to 267, and 283 to 299; these read VQPQ…QALS, SGTL…TTSL, and QQQQ…PPYS.

It belongs to the HSF family.

It is found in the nucleus. The chain is Protein MGA1 (MGA1) from Saccharomyces cerevisiae (strain ATCC 204508 / S288c) (Baker's yeast).